The chain runs to 1488 residues: Chromosome partition protein MukB (1488 aa).

An ATP-binding site is contributed by 34–41 (GGNGAGKS). 3 coiled-coil regions span residues 326–418 (LEAD…QYNQ), 444–472 (LDTFQAKEQEATEKLLSLEQKMSVAQTAH), and 509–602 (RHLA…QRAP). The flexible hinge stretch occupies residues 666-783 (PGGAEDQRLN…SLPIFGRAAR (118 aa)). Coiled coils occupy residues 835 to 923 (EAEI…AKLE), 977 to 1116 (EMLS…AKAG), and 1209 to 1265 (VEAI…LQSV). Residues 1049–1074 (ADSGAEERARQRRDELHAQLSNNRSR) form a disordered region. Over residues 1051–1065 (SGAEERARQRRDELH) the composition is skewed to basic and acidic residues.

This sequence belongs to the SMC family. MukB subfamily. Homodimerization via its hinge domain. Binds to DNA via its C-terminal region. Interacts, and probably forms a ternary complex, with MukE and MukF via its C-terminal region. The complex formation is stimulated by calcium or magnesium. Interacts with tubulin-related protein FtsZ.

The protein localises to the cytoplasm. The protein resides in the nucleoid. Its function is as follows. Plays a central role in chromosome condensation, segregation and cell cycle progression. Functions as a homodimer, which is essential for chromosome partition. Involved in negative DNA supercoiling in vivo, and by this means organize and compact chromosomes. May achieve or facilitate chromosome segregation by condensation DNA from both sides of a centrally located replisome during cell division. The chain is Chromosome partition protein MukB from Salmonella paratyphi A (strain ATCC 9150 / SARB42).